The sequence spans 269 residues: Gem-associated protein 2 (269 aa).

S70 and S155 each carry phosphoserine.

It belongs to the gemin-2 family. As to quaternary structure, monomer. Part of the core SMN complex that contains SMN1, GEMIN2/SIP1, DDX20/GEMIN3, GEMIN4, GEMIN5, GEMIN6, GEMIN7, GEMIN8 and STRAP/UNRIP. Part of the SMN-Sm complex that contains SMN1, GEMIN2/SIP1, DDX20/GEMIN3, GEMIN4, GEMIN5, GEMIN6, GEMIN7, GEMIN8, STRAP/UNRIP and the Sm proteins SNRPB, SNRPD1, SNRPD2, SNRPD3, SNRPE, SNRPF and SNRPG. Interacts with GEMIN5; the interaction is direct. Interacts (via C-terminus) with SMN1; the interaction is direct. Interacts with SNRPD1; the interaction is direct. Interacts with SNRPD2; the interaction is direct. Interacts (via N-terminus) with SNRPF; the interaction is direct. Interacts (via N-terminus) with SNRPE; the interaction is direct. Interacts (via N-terminus) with SNRPG; the interaction is direct.

Its subcellular location is the nucleus. The protein resides in the gem. It localises to the cytoplasm. Its function is as follows. The SMN complex catalyzes the assembly of small nuclear ribonucleoproteins (snRNPs), the building blocks of the spliceosome, and thereby plays an important role in the splicing of cellular pre-mRNAs. Most spliceosomal snRNPs contain a common set of Sm proteins SNRPB, SNRPD1, SNRPD2, SNRPD3, SNRPE, SNRPF and SNRPG that assemble in a heptameric protein ring on the Sm site of the small nuclear RNA to form the core snRNP (Sm core). In the cytosol, the Sm proteins SNRPD1, SNRPD2, SNRPE, SNRPF and SNRPG (5Sm) are trapped in an inactive 6S pICln-Sm complex by the chaperone CLNS1A that controls the assembly of the core snRNP. To assemble core snRNPs, the SMN complex accepts the trapped 5Sm proteins from CLNS1A. Binding of snRNA inside 5Sm ultimately triggers eviction of the SMN complex, thereby allowing binding of SNRPD3 and SNRPB to complete assembly of the core snRNP. Within the SMN complex, GEMIN2 constrains the conformation of 5Sm, thereby promoting 5Sm binding to snRNA containing the snRNP code (a nonameric Sm site and a 3'-adjacent stem-loop), thus preventing progression of assembly until a cognate substrate is bound. The polypeptide is Gem-associated protein 2 (Mus musculus (Mouse)).